Consider the following 445-residue polypeptide: tRNA modification GTPase MnmE (445 aa).

Arginine 20, glutamate 79, and lysine 119 together coordinate (6S)-5-formyl-5,6,7,8-tetrahydrofolate. Residues 215-371 (GLKLAIIGPP…ILKNIENIAE (157 aa)) enclose the TrmE-type G domain. Position 225 (asparagine 225) interacts with K(+). Residues 225–230 (NTGKSS), 244–250 (SNIAGTT), and 269–272 (DTAG) each bind GTP. Serine 229 is a binding site for Mg(2+). K(+) contacts are provided by serine 244, isoleucine 246, and threonine 249. A Mg(2+)-binding site is contributed by threonine 250. Lysine 445 is a (6S)-5-formyl-5,6,7,8-tetrahydrofolate binding site.

It belongs to the TRAFAC class TrmE-Era-EngA-EngB-Septin-like GTPase superfamily. TrmE GTPase family. As to quaternary structure, homodimer. Heterotetramer of two MnmE and two MnmG subunits. K(+) is required as a cofactor.

The protein resides in the cytoplasm. Exhibits a very high intrinsic GTPase hydrolysis rate. Involved in the addition of a carboxymethylaminomethyl (cmnm) group at the wobble position (U34) of certain tRNAs, forming tRNA-cmnm(5)s(2)U34. This Rickettsia typhi (strain ATCC VR-144 / Wilmington) protein is tRNA modification GTPase MnmE.